The chain runs to 347 residues: UPF0284 protein LS215_0030 (347 aa).

The protein belongs to the UPF0284 family.

The polypeptide is UPF0284 protein LS215_0030 (Saccharolobus islandicus (strain L.S.2.15 / Lassen #1) (Sulfolobus islandicus)).